The primary structure comprises 443 residues: MQHELAQTIPELILWTKEREFSLSLSSDRLAFLLAIALYNNERTDGELLESDLQDIFRHVSNAFEQSEATQTQRANNAINDLVKQRFLNRFSSEFTEGLAIYRLTPLGVGVSEYYIRQREFSTLRLSIQLSIVADEIQRASNAAEEGGDERFWRNQVFAPLKFSVAEIFDSIDLSQRMMDENQQQIRERIAMLLSQNWHEAIATCQQLLDETSGNLRELQDVLNASGDKLQSQLLRIQSCLIGRDDLDFVDQLIVNLQNKLDRIISWGQQAIDLWIGYDRHVHKFIRTAIDMDKNRVFGQRLRQSIQDYFESPWQLYIAKAEPLLDLRDDETELNEAEAVGELPTELEYESLTQVQEQIIATMQAHLAPFREQGKPIDLGAILREQLAMYPLSRHFDVARIIVDQAVKLGMASQDSQAIYPEWQSINDNGAEVQANVIDQYNK.

Residues 209 to 237 (LDETSGNLRELQDVLNASGDKLQSQLLRI) form a leucine-zipper region.

It belongs to the MukF family. In terms of assembly, interacts, and probably forms a ternary complex, with MukE and MukB via its C-terminal region. The complex formation is stimulated by calcium or magnesium. It is required for an interaction between MukE and MukB.

The protein resides in the cytoplasm. Its subcellular location is the nucleoid. In terms of biological role, involved in chromosome condensation, segregation and cell cycle progression. May participate in facilitating chromosome segregation by condensation DNA from both sides of a centrally located replisome during cell division. Not required for mini-F plasmid partitioning. Probably acts via its interaction with MukB and MukE. Overexpression results in anucleate cells. It has a calcium binding activity. In Glaesserella parasuis serovar 5 (strain SH0165) (Haemophilus parasuis), this protein is Chromosome partition protein MukF.